The primary structure comprises 34 residues: Beta/mu-theraphotoxin-Pe1a (34 aa).

3 disulfide bridges follow: cysteine 2–cysteine 16, cysteine 9–cysteine 21, and cysteine 15–cysteine 28.

Belongs to the neurotoxin 10 (Hwtx-1) family. 54 (ProTx-1) subfamily. Expressed by the venom gland.

The protein localises to the secreted. Functionally, ion channel impairing toxin that inhibits voltage-gated sodium channels. The recombinantly expressed toxin shows a weak activity against Nav1.7/SCN9A (25% inhibition at 10 uM), and shifts the voltage dependence of channel activation to more depolarized potentials. This Phormingochilus everetti (Malaysian purple earth tiger tarantula) protein is Beta/mu-theraphotoxin-Pe1a.